A 151-amino-acid polypeptide reads, in one-letter code: NADH-quinone oxidoreductase subunit I 2 (151 aa).

2 4Fe-4S ferredoxin-type domains span residues Pro49–Glu82 and Val93–Asp122. [4Fe-4S] cluster contacts are provided by Cys62, Cys65, Cys68, Cys72, Cys102, Cys105, Cys108, and Cys112.

This sequence belongs to the complex I 23 kDa subunit family. As to quaternary structure, NDH-1 is composed of 14 different subunits. Subunits NuoA, H, J, K, L, M, N constitute the membrane sector of the complex. [4Fe-4S] cluster is required as a cofactor.

It localises to the cell inner membrane. The catalysed reaction is a quinone + NADH + 5 H(+)(in) = a quinol + NAD(+) + 4 H(+)(out). In terms of biological role, NDH-1 shuttles electrons from NADH, via FMN and iron-sulfur (Fe-S) centers, to quinones in the respiratory chain. The immediate electron acceptor for the enzyme in this species is believed to be ubiquinone. Couples the redox reaction to proton translocation (for every two electrons transferred, four hydrogen ions are translocated across the cytoplasmic membrane), and thus conserves the redox energy in a proton gradient. This is NADH-quinone oxidoreductase subunit I 2 from Solibacter usitatus (strain Ellin6076).